A 484-amino-acid polypeptide reads, in one-letter code: mRNA decay activator protein ZFP36L2 (484 aa).

Residues S57 and S127 each carry the phosphoserine modification. The tract at residues 100 to 152 is disordered; that stretch reads YGQLKEPSGGSGTALVTKESKFRDRSFSENGERSQHLLHLQQQQKGGSGSQIN. A compositionally biased stretch (basic and acidic residues) spans 117 to 134; sequence KESKFRDRSFSENGERSQ. The short motif at 155-160 is the RNA-binding element; sequence RYKTEL. C3H1-type zinc fingers lie at residues 155-183 and 193-221; these read RYKTELCRPFEESGTCKYGEKCQFAHGFH and KYKTELCRTFHTIGFCPYGPRCHFIHNAD. Positions 172–213 are RNA-binding; it reads YGEKCQFAHGFHELRSLTRHPKYKTELCRTFHTIGFCPYGPR. 2 disordered regions span residues 261 to 304 and 395 to 484; these read SLSF…SCSS and QQGL…ISDD. The span at 401–418 shows a compositional bias: pro residues; the sequence is PAPPPAQPPAAPAPPSPP. Residues 449-468 show a composition bias toward low complexity; it reads YLSGSLSSGSLSGSESPSLD. Phosphoserine; by RPS6KA1 is present on residues S480 and S482.

Associates with the cytoplasmic CCR4-NOT deadenylase to trigger ARE-containing mRNA deadenylation and decay processes. Interacts with CNOT7; this interaction is inhibited in response to phorbol 12-myristate 13-acetate (PMA) treatment in a p38 MAPK-dependent manner. Interacts with CNOT6L. In terms of processing, phosphorylated by RPS6KA1 at Ser-480 and Ser-482 upon phorbol 12-myristate 13-acetate (PMA) treatment; this phosphorylation results in dissociation of the CCR4-NOT-deadenylase complex and induces p38 MAPK-mediated stabilization of the low-density lipoprotein (LDL) receptor (LDLR) mRNA. Phosphorylation occurs during early preadipocyte differentiation. In terms of tissue distribution, expressed in preadipocytes and adipocytes (at protein level). Expressed at highest level in lymphoid tissues such as thymus, spleen, lung, uterus, ovary, small and large intestine, mammary gland, fat and bone marrow. Expressed at intermediate level in kidney, heart, adrenal, eye and fetal liver. Weakly expressed in brain, skeletal muscle and liver. Expressed through B lymphocyte development. Expressed in superior cervical ganglion (SCG) and dorsal root ganglion (DRG). Expressed in embryonic stem cells (ESCs). Expressed in oocytes.

It localises to the nucleus. The protein resides in the cytoplasm. Its function is as follows. Zinc-finger RNA-binding protein that destabilizes several cytoplasmic AU-rich element (ARE)-containing mRNA transcripts by promoting their poly(A) tail removal or deadenylation, and hence provide a mechanism for attenuating protein synthesis. Acts as a 3'-untranslated region (UTR) ARE mRNA-binding adapter protein to communicate signaling events to the mRNA decay machinery. Functions by recruiting the CCR4-NOT deadenylase complex and probably other components of the cytoplasmic RNA decay machinery to the bound ARE-containing mRNAs, and hence promotes ARE-mediated mRNA deadenylation and decay processes. Binds to 3'-UTR ARE of numerous mRNAs. Promotes ARE-containing mRNA decay of the low-density lipoprotein (LDL) receptor (LDLR) mRNA in response to phorbol 12-myristate 13-acetate (PMA) treatment in a p38 MAPK-dependent manner. Positively regulates early adipogenesis by promoting ARE-mediated mRNA decay of immediate early genes (IEGs). Plays a role in mature peripheral neuron integrity by promoting ARE-containing mRNA decay of the transcriptional repressor REST mRNA. Plays a role in ovulation and oocyte meiotic maturation by promoting ARE-mediated mRNA decay of the luteinizing hormone receptor LHCGR mRNA. Acts as a negative regulator of erythroid cell differentiation: promotes glucocorticoid-induced self-renewal of erythroid cells by binding mRNAs that are induced or highly expressed during terminal erythroid differentiation and promotes their degradation, preventing erythroid cell differentiation. In association with ZFP36L1 maintains quiescence on developing B lymphocytes by promoting ARE-mediated decay of several mRNAs encoding cell cycle regulators that help B cells progress through the cell cycle, and hence ensuring accurate variable-diversity-joining (VDJ) recombination process and functional immune cell formation. Together with ZFP36L1 is also necessary for thymocyte development and prevention of T-cell acute lymphoblastic leukemia (T-ALL) transformation by promoting ARE-mediated mRNA decay of the oncogenic transcription factor NOTCH1 mRNA. This is mRNA decay activator protein ZFP36L2 from Mus musculus (Mouse).